The chain runs to 490 residues: Cobyric acid synthase (490 aa).

The 188-residue stretch at 252 to 439 folds into the GATase cobBQ-type domain; sequence RLKVVVPVLP…LHGLFESTAA (188 aa). C333 (nucleophile) is an active-site residue. Residue H431 is part of the active site.

The protein belongs to the CobB/CobQ family. CobQ subfamily.

The protein operates within cofactor biosynthesis; adenosylcobalamin biosynthesis. Functionally, catalyzes amidations at positions B, D, E, and G on adenosylcobyrinic A,C-diamide. NH(2) groups are provided by glutamine, and one molecule of ATP is hydrogenolyzed for each amidation. This is Cobyric acid synthase from Pseudomonas aeruginosa (strain UCBPP-PA14).